A 483-amino-acid polypeptide reads, in one-letter code: Phosphomethylpyrimidine synthase (483 aa).

Residues Asn97, Met126, Tyr156, His192, 212–214 (SRG), 253–256 (DSLR), and Glu292 each bind substrate. His296 lines the Zn(2+) pocket. Residue Tyr319 coordinates substrate. His360 contacts Zn(2+). Cys440, Cys443, and Cys448 together coordinate [4Fe-4S] cluster.

This sequence belongs to the ThiC family. The cofactor is [4Fe-4S] cluster.

The catalysed reaction is 5-amino-1-(5-phospho-beta-D-ribosyl)imidazole + S-adenosyl-L-methionine = 4-amino-2-methyl-5-(phosphooxymethyl)pyrimidine + CO + 5'-deoxyadenosine + formate + L-methionine + 3 H(+). Its pathway is cofactor biosynthesis; thiamine diphosphate biosynthesis. Catalyzes the synthesis of the hydroxymethylpyrimidine phosphate (HMP-P) moiety of thiamine from aminoimidazole ribotide (AIR) in a radical S-adenosyl-L-methionine (SAM)-dependent reaction. The sequence is that of Phosphomethylpyrimidine synthase from Parasynechococcus marenigrum (strain WH8102).